A 1003-amino-acid chain; its full sequence is Rho-associated protein kinase 1 (1003 aa).

A disordered region spans residues 1-28; the sequence is VAPVVPDLSSDIDTSNFDDLEEDKGEEE. Residues 1–58 enclose the AGC-kinase C-terminal domain; it reads VAPVVPDLSSDIDTSNFDDLEEDKGEEETFPIPKAFVGNQLPFVGFTYYSNRRYLSSA. Residues 16–28 are compositionally biased toward acidic residues; the sequence is NFDDLEEDKGEEE. The interaction with FHOD1 stretch occupies residues 17–376; the sequence is FDDLEEDKGE…KKLKEEREAR (360 aa). Residues 71–341 are a coiled coil; sequence KSLQESLQKT…RLEQEVNEHK (271 aa). One can recognise an REM-1 domain in the interval 128-205; it reads STVSQIEKEK…LEEANDLLRT (78 aa). Lys-296 bears the N6-acetyllysine mark. The interval 356–595 is SHROOM3 binding; it reads EAKSVAMCEM…TVSRLEEANS (240 aa). Residues 598–664 enclose the RhoBD domain; it reads TKDIEILRRE…LAEIMNRKDF (67 aa). Residues 647 to 659 form an RHOA binding region; that stretch reads LKTQAVNKLAEIM. A coiled-coil region spans residues 660-751; it reads NRKDFKIDRK…KLLDLSDSTS (92 aa). Phosphoserine occurs at positions 754 and 757. An auto-inhibitory region spans residues 764-1003; that stretch reads NLPESRIEGW…VVKNTSGKTR (240 aa). A PH domain is found at 767–966; it reads ESRIEGWLSV…WVTHLVKKIP (200 aa). A Phorbol-ester/DAG-type zinc finger spans residues 877–930; the sequence is GHEFIPTLYHFPANCDACAKPLWHVFKPPPALECRRCHVKCHRDHLDKKEDLIC. The tract at residues 968–1003 is disordered; the sequence is NPPSGFVRASPRTLSTRSTANQSFRKVVKNTSGKTR. Ser-977 bears the Phosphoserine mark. Over residues 979-1003 the composition is skewed to polar residues; it reads RTLSTRSTANQSFRKVVKNTSGKTR.

It belongs to the protein kinase superfamily. AGC Ser/Thr protein kinase family. In terms of assembly, homodimer. Interacts with RHOA (activated by GTP), RHOB, RHOC, GEM, MYLC2B, RHOE, PPP1R12A, LIMK1, LIMK2, TSG101, CHORDC1, DAPK3, PFN1, PTEN and JIP3. Interacts with ITGB1BP1 (via N-terminus and PTB domain). Interacts with FHOD1 in a Src-dependent manner. Interacts with SHROOM3. Mg(2+) serves as cofactor. In terms of processing, autophosphorylated on serine and threonine residues. Post-translationally, cleaved by caspase-3 during apoptosis. This leads to constitutive activation of the kinase and membrane blebbing.

It localises to the cytoplasm. Its subcellular location is the cytoskeleton. The protein localises to the microtubule organizing center. It is found in the centrosome. The protein resides in the centriole. It localises to the golgi apparatus membrane. Its subcellular location is the cell projection. The protein localises to the bleb. It is found in the cell membrane. The protein resides in the lamellipodium. It localises to the ruffle. It catalyses the reaction L-seryl-[protein] + ATP = O-phospho-L-seryl-[protein] + ADP + H(+). The catalysed reaction is L-threonyl-[protein] + ATP = O-phospho-L-threonyl-[protein] + ADP + H(+). Its activity is regulated as follows. Activated by RHOA binding. Inhibited by Y-27632. Functionally, protein kinase which is a key regulator of actin cytoskeleton and cell polarity. Involved in regulation of smooth muscle contraction, actin cytoskeleton organization, stress fiber and focal adhesion formation, neurite retraction, cell adhesion and motility via phosphorylation of DAPK3, GFAP, LIMK1, LIMK2, MYL9/MLC2, TPPP, PFN1 and PPP1R12A. Phosphorylates FHOD1 and acts synergistically with it to promote SRC-dependent non-apoptotic plasma membrane blebbing. Phosphorylates JIP3 and regulates the recruitment of JNK to JIP3 upon UVB-induced stress. Acts as a suppressor of inflammatory cell migration by regulating PTEN phosphorylation and stability. Acts as a negative regulator of VEGF-induced angiogenic endothelial cell activation. Required for centrosome positioning and centrosome-dependent exit from mitosis. Plays a role in terminal erythroid differentiation. May regulate closure of the eyelids and ventral body wall by inducing the assembly of actomyosin bundles. Promotes keratinocyte terminal differentiation. Involved in osteoblast compaction through the fibronectin fibrillogenesis cell-mediated matrix assembly process, essential for osteoblast mineralization. This Pan troglodytes (Chimpanzee) protein is Rho-associated protein kinase 1 (ROCK1).